Reading from the N-terminus, the 185-residue chain is UPF0301 protein MS0260 (185 aa).

This sequence belongs to the UPF0301 (AlgH) family.

The sequence is that of UPF0301 protein MS0260 from Mannheimia succiniciproducens (strain KCTC 0769BP / MBEL55E).